Here is a 1202-residue protein sequence, read N- to C-terminus: DNA-directed RNA polymerase subunit beta (1202 aa).

The protein belongs to the RNA polymerase beta chain family. In terms of assembly, the RNAP catalytic core consists of 2 alpha, 1 beta, 1 beta' and 1 omega subunit. When a sigma factor is associated with the core the holoenzyme is formed, which can initiate transcription.

It carries out the reaction RNA(n) + a ribonucleoside 5'-triphosphate = RNA(n+1) + diphosphate. Functionally, DNA-dependent RNA polymerase catalyzes the transcription of DNA into RNA using the four ribonucleoside triphosphates as substrates. The sequence is that of DNA-directed RNA polymerase subunit beta from Leuconostoc mesenteroides subsp. mesenteroides (strain ATCC 8293 / DSM 20343 / BCRC 11652 / CCM 1803 / JCM 6124 / NCDO 523 / NBRC 100496 / NCIMB 8023 / NCTC 12954 / NRRL B-1118 / 37Y).